Reading from the N-terminus, the 102-residue chain is Small ribosomal subunit protein uS10 (102 aa).

It belongs to the universal ribosomal protein uS10 family. Part of the 30S ribosomal subunit.

Involved in the binding of tRNA to the ribosomes. This chain is Small ribosomal subunit protein uS10, found in Acidiphilium cryptum (strain JF-5).